The sequence spans 446 residues: Probable glycine dehydrogenase (decarboxylating) subunit 1 (446 aa).

The protein belongs to the GcvP family. N-terminal subunit subfamily. As to quaternary structure, the glycine cleavage system is composed of four proteins: P, T, L and H. In this organism, the P 'protein' is a heterodimer of two subunits.

It catalyses the reaction N(6)-[(R)-lipoyl]-L-lysyl-[glycine-cleavage complex H protein] + glycine + H(+) = N(6)-[(R)-S(8)-aminomethyldihydrolipoyl]-L-lysyl-[glycine-cleavage complex H protein] + CO2. The glycine cleavage system catalyzes the degradation of glycine. The P protein binds the alpha-amino group of glycine through its pyridoxal phosphate cofactor; CO(2) is released and the remaining methylamine moiety is then transferred to the lipoamide cofactor of the H protein. The polypeptide is Probable glycine dehydrogenase (decarboxylating) subunit 1 (Methylocella silvestris (strain DSM 15510 / CIP 108128 / LMG 27833 / NCIMB 13906 / BL2)).